The sequence spans 337 residues: Neurogenic differentiation factor 6 (337 aa).

Positions 43 to 82 are disordered; the sequence is LRGKSIKRAPGEETEKEEEEEDREEEDENGLPRRRGLRKK. The segment covering 54 to 71 has biased composition (acidic residues); the sequence is EETEKEEEEEDREEEDEN. A Nuclear localization signal motif is present at residues 80–86; that stretch reads RKKKTTK. The 53-residue stretch at 94-146 folds into the bHLH domain; that stretch reads FRRQEANARERNRMHGLNDALDNLRKVVPCYSKTQKLSKIETLRLAKNYIWAL.

Efficient DNA binding requires dimerization with another bHLH protein.

It is found in the nucleus. Activates E box-dependent transcription in collaboration with TCF3/E47. May be a trans-acting factor involved in the development and maintenance of the mammalian nervous system. Transactivates the promoter of its own gene. The chain is Neurogenic differentiation factor 6 (NEUROD6) from Bos taurus (Bovine).